The chain runs to 329 residues: Fructose-1,6-bisphosphatase class 1 (329 aa).

Residues Glu-84, Asp-103, Leu-105, and Asp-106 each coordinate Mg(2+). Residues 106–109, Asn-196, and Lys-262 each bind substrate; that span reads DGSS. Residue Glu-268 coordinates Mg(2+).

Belongs to the FBPase class 1 family. Homotetramer. Mg(2+) is required as a cofactor.

The protein localises to the cytoplasm. It carries out the reaction beta-D-fructose 1,6-bisphosphate + H2O = beta-D-fructose 6-phosphate + phosphate. It functions in the pathway carbohydrate biosynthesis; gluconeogenesis. This is Fructose-1,6-bisphosphatase class 1 from Shewanella halifaxensis (strain HAW-EB4).